We begin with the raw amino-acid sequence, 420 residues long: Acetylornithine aminotransferase (420 aa).

Pyridoxal 5'-phosphate is bound by residues 118 to 119 (GA) and Phe-151. Arg-154 is a N(2)-acetyl-L-ornithine binding site. Residue 242 to 245 (DEVQ) coordinates pyridoxal 5'-phosphate. Position 271 is an N6-(pyridoxal phosphate)lysine (Lys-271). Ser-298 lines the N(2)-acetyl-L-ornithine pocket. Thr-299 lines the pyridoxal 5'-phosphate pocket.

Belongs to the class-III pyridoxal-phosphate-dependent aminotransferase family. ArgD subfamily. Homodimer. Pyridoxal 5'-phosphate serves as cofactor.

The protein resides in the cytoplasm. The catalysed reaction is N(2)-acetyl-L-ornithine + 2-oxoglutarate = N-acetyl-L-glutamate 5-semialdehyde + L-glutamate. It functions in the pathway amino-acid biosynthesis; L-arginine biosynthesis; N(2)-acetyl-L-ornithine from L-glutamate: step 4/4. This chain is Acetylornithine aminotransferase, found in Parasynechococcus marenigrum (strain WH8102).